The following is a 320-amino-acid chain: Probable protein adenylyltransferase aq_aa38 (320 aa).

Residues 76-206 (VSEALILWIY…AIVVVEKLSR (131 aa)) form the Fido domain. ATP-binding positions include 100-101 (KS), 157-159 (GNG), and R163.

The protein belongs to the fic family.

It catalyses the reaction L-tyrosyl-[protein] + ATP = O-(5'-adenylyl)-L-tyrosyl-[protein] + diphosphate. It carries out the reaction L-threonyl-[protein] + ATP = 3-O-(5'-adenylyl)-L-threonyl-[protein] + diphosphate. In terms of biological role, probable adenylyltransferase that mediates the addition of adenosine 5'-monophosphate (AMP) to specific residues of target proteins. In Aquifex aeolicus (strain VF5), this protein is Probable protein adenylyltransferase aq_aa38.